The chain runs to 881 residues: Cell wall protein PRY3 (881 aa).

An N-terminal signal peptide occupies residues 1–18 (MLEFPISVLLGCLVAVKA). The 115-residue stretch at 30-144 (LNEHNKFRAL…TWNNYIVCSY (115 aa)) folds into the SCP domain. An N-linked (GlcNAc...) asparagine glycan is attached at N101. The interval 262 to 313 (VVSSDATSSTTTTSSVATSSSTTSSDPTSSTAAASSSDPASSSAAASSSAST) is disordered. N360 is a glycosylation site (N-linked (GlcNAc...) asparagine). 2 disordered regions span residues 381-400 (AADD…VSEH) and 453-494 (VSST…NSAA). The segment covering 386–400 (QGSTSKEATSSVSEH) has biased composition (polar residues). N-linked (GlcNAc...) asparagine glycosylation is found at N488, N535, N547, and N569. The segment at 579–611 (IDPTLDPTDNSASPTDNAKHTSTYGSSSTGASL) is disordered. The segment covering 585–594 (PTDNSASPTD) has biased composition (polar residues). The span at 599–611 (TSTYGSSSTGASL) shows a compositional bias: low complexity. The N-linked (GlcNAc...) asparagine glycan is linked to N625. Disordered stretches follow at residues 758-788 (LASD…TTTT) and 800-830 (PSST…MHQP). Low complexity-rich tracts occupy residues 776–788 (STSN…TTTT) and 808–820 (RTTT…STTS). Residues 821–830 (QQDGSAMHQP) show a composition bias toward polar residues. G853 carries the GPI-anchor amidated glycine lipid modification. Positions 854 to 881 (AATPLSIFQCNSLAGTIAAFVVAVLFAF) are cleaved as a propeptide — removed in mature form.

The protein belongs to the CRISP family. Post-translationally, the GPI-anchor is attached to the protein in the endoplasmic reticulum and serves to target the protein to the cell surface. There, the glucosamine-inositol phospholipid moiety is cleaved off and the GPI-modified mannoprotein is covalently attached via its lipidless GPI glycan remnant to the 1,6-beta-glucan of the outer cell wall layer.

It is found in the secreted. Its subcellular location is the cell wall. The protein resides in the membrane. Its function is as follows. The full-length isoform (isoform Long) is a daughter cell-specific cell wall protein required for efficient export of lipids such as acetylated sterols. Acts in detoxification of hydrophobic compounds. Involved in tolerance to organic solvents such as dimethyl sulfoxide (DMSO). Also plays a role as an inhibitor of mating. STE12 is utilized as a repressor of full-length PRY3 transcription, ensuring efficient mating. In terms of biological role, there is no evidence that production of the short PRY3 transcript (isoform Short) is anything more than an adventitious by-product of the mechanism responsible for the repression of the full-length transcript. Moreover, no disadvantage is detectable for cells unable to make the short transcript. The sequence is that of Cell wall protein PRY3 (PRY3) from Saccharomyces cerevisiae (strain ATCC 204508 / S288c) (Baker's yeast).